A 165-amino-acid chain; its full sequence is Transcription antitermination protein NusB (165 aa).

Residues 1–20 (MSDVENGGEPRQPSVKPANQ) are disordered.

The protein belongs to the NusB family.

In terms of biological role, involved in transcription antitermination. Required for transcription of ribosomal RNA (rRNA) genes. Binds specifically to the boxA antiterminator sequence of the ribosomal RNA (rrn) operons. This chain is Transcription antitermination protein NusB, found in Agrobacterium fabrum (strain C58 / ATCC 33970) (Agrobacterium tumefaciens (strain C58)).